The primary structure comprises 425 residues: D-amino acid dehydrogenase (425 aa).

Position 3 to 17 (3 to 17 (VLVMGAGVIGVTTAY)) interacts with FAD.

Belongs to the DadA oxidoreductase family. It depends on FAD as a cofactor.

It carries out the reaction a D-alpha-amino acid + A + H2O = a 2-oxocarboxylate + AH2 + NH4(+). It participates in amino-acid degradation; D-alanine degradation; NH(3) and pyruvate from D-alanine: step 1/1. In terms of biological role, oxidative deamination of D-amino acids. The protein is D-amino acid dehydrogenase of Rhodopseudomonas palustris (strain HaA2).